The following is a 158-amino-acid chain: Transcription elongation factor GreA (158 aa).

This sequence belongs to the GreA/GreB family.

Necessary for efficient RNA polymerase transcription elongation past template-encoded arresting sites. The arresting sites in DNA have the property of trapping a certain fraction of elongating RNA polymerases that pass through, resulting in locked ternary complexes. Cleavage of the nascent transcript by cleavage factors such as GreA or GreB allows the resumption of elongation from the new 3'terminus. GreA releases sequences of 2 to 3 nucleotides. The polypeptide is Transcription elongation factor GreA (Rhizobium etli (strain ATCC 51251 / DSM 11541 / JCM 21823 / NBRC 15573 / CFN 42)).